A 537-amino-acid polypeptide reads, in one-letter code: 2-succinyl-5-enolpyruvyl-6-hydroxy-3-cyclohexene-1-carboxylate synthase (537 aa).

It belongs to the TPP enzyme family. MenD subfamily. Homodimer. Requires Mg(2+) as cofactor. The cofactor is Mn(2+). Thiamine diphosphate is required as a cofactor.

It carries out the reaction isochorismate + 2-oxoglutarate + H(+) = 5-enolpyruvoyl-6-hydroxy-2-succinyl-cyclohex-3-ene-1-carboxylate + CO2. It participates in quinol/quinone metabolism; 1,4-dihydroxy-2-naphthoate biosynthesis; 1,4-dihydroxy-2-naphthoate from chorismate: step 2/7. The protein operates within quinol/quinone metabolism; menaquinone biosynthesis. In terms of biological role, catalyzes the thiamine diphosphate-dependent decarboxylation of 2-oxoglutarate and the subsequent addition of the resulting succinic semialdehyde-thiamine pyrophosphate anion to isochorismate to yield 2-succinyl-5-enolpyruvyl-6-hydroxy-3-cyclohexene-1-carboxylate (SEPHCHC). The protein is 2-succinyl-5-enolpyruvyl-6-hydroxy-3-cyclohexene-1-carboxylate synthase of Nocardioides sp. (strain ATCC BAA-499 / JS614).